Consider the following 173-residue polypeptide: Crossover junction endodeoxyribonuclease RuvC (173 aa).

Active-site residues include Asp8, Glu67, and Asp139. Mg(2+)-binding residues include Asp8, Glu67, and Asp139.

This sequence belongs to the RuvC family. Homodimer which binds Holliday junction (HJ) DNA. The HJ becomes 2-fold symmetrical on binding to RuvC with unstacked arms; it has a different conformation from HJ DNA in complex with RuvA. In the full resolvosome a probable DNA-RuvA(4)-RuvB(12)-RuvC(2) complex forms which resolves the HJ. Mg(2+) serves as cofactor.

Its subcellular location is the cytoplasm. The catalysed reaction is Endonucleolytic cleavage at a junction such as a reciprocal single-stranded crossover between two homologous DNA duplexes (Holliday junction).. Its function is as follows. The RuvA-RuvB-RuvC complex processes Holliday junction (HJ) DNA during genetic recombination and DNA repair. Endonuclease that resolves HJ intermediates. Cleaves cruciform DNA by making single-stranded nicks across the HJ at symmetrical positions within the homologous arms, yielding a 5'-phosphate and a 3'-hydroxyl group; requires a central core of homology in the junction. The consensus cleavage sequence is 5'-(A/T)TT(C/G)-3'. Cleavage occurs on the 3'-side of the TT dinucleotide at the point of strand exchange. HJ branch migration catalyzed by RuvA-RuvB allows RuvC to scan DNA until it finds its consensus sequence, where it cleaves and resolves the cruciform DNA. The chain is Crossover junction endodeoxyribonuclease RuvC from Proteus mirabilis (strain HI4320).